The sequence spans 395 residues: G-protein coupled receptor 182 (395 aa).

Residues 1–53 (MSVIPSSRPVSTLAPDNDFREIHNWTELLHLFNQTFSDCHMELNENTKQVVLF) are Extracellular-facing. N-linked (GlcNAc...) asparagine glycans are attached at residues Asn24 and Asn33. A helical membrane pass occupies residues 54–75 (VFYLAIFVVGLVENVLVICVNC). The Cytoplasmic segment spans residues 76–86 (RRSGRVGMLNL). Residues 87–109 (YILNMAVADLGIILSLPVWMLEV) traverse the membrane as a helical segment. Residues 110–123 (MLEYTWLWGSFSCR) lie on the Extracellular side of the membrane. A disulfide bridge links Cys122 with Cys198. The helical transmembrane segment at 124–145 (FIHYFYLANMYSSIFFLTCLSI) threads the bilayer. Residues 146–166 (DRYVTLTNTSPSWQRHQHRIR) are Cytoplasmic-facing. A helical transmembrane segment spans residues 167–189 (RAVCAGVWVLSAIIPLPEVVHIQ). Residues 190-213 (LLDGSEPMCLFLAPFETYSAWALA) lie on the Extracellular side of the membrane. Residues 214 to 235 (VALSATILGFLLPFPLIAVFNI) traverse the membrane as a helical segment. Topologically, residues 236–254 (LSACRLRRQGQTESRRHCL) are cytoplasmic. Residues 255–276 (LMWAYIVVFVICWLPYHVTMLL) form a helical membrane-spanning segment. Topologically, residues 277 to 295 (LTLHTTHIFLHCNLVNFLY) are extracellular. Residues 296–316 (FFYEIIDCFSMLHCVANPILY) form a helical membrane-spanning segment. Topologically, residues 317-395 (NFLSPSFRGR…RTPHLHSAIP (79 aa)) are cytoplasmic. Ser329 is modified (phosphoserine).

This sequence belongs to the G-protein coupled receptor 1 family. As to expression, expressed in a wide variety of peripheral tissues in the adult rat with prominent expression in lung, testis, adrenal and liver.

The protein localises to the cell membrane. In terms of biological role, orphan receptor. The sequence is that of G-protein coupled receptor 182 (Gpr182) from Rattus norvegicus (Rat).